Consider the following 354-residue polypeptide: COP9 signalosome complex subunit 5 (354 aa).

Residues Val-56–Asp-193 enclose the MPN domain. Residues His-139, His-141, and Asp-152 each contribute to the Zn(2+) site. Residues His-139–Asp-152 carry the JAMM motif motif. The disordered stretch occupies residues Asp-193 to Ser-212.

Belongs to the peptidase M67A family. CSN5 subfamily. In terms of assembly, component of the COP9 signalosome (CSN) complex.

It is found in the cytoplasm. The protein resides in the nucleus. In terms of biological role, catalytic Component of the COP9 signalosome (CSN) complex that acts as an regulator of the ubiquitin (Ubl) conjugation pathway by mediating the deneddylation of the cullin subunit of SCF-type E3 ubiquitin-protein ligase complexes. This chain is COP9 signalosome complex subunit 5 (RRI1), found in Yarrowia lipolytica (strain CLIB 122 / E 150) (Yeast).